Here is a 560-residue protein sequence, read N- to C-terminus: DNA ligase B (560 aa).

Lys-124 functions as the N6-AMP-lysine intermediate in the catalytic mechanism.

It belongs to the NAD-dependent DNA ligase family. LigB subfamily.

It carries out the reaction NAD(+) + (deoxyribonucleotide)n-3'-hydroxyl + 5'-phospho-(deoxyribonucleotide)m = (deoxyribonucleotide)n+m + AMP + beta-nicotinamide D-nucleotide.. Catalyzes the formation of phosphodiester linkages between 5'-phosphoryl and 3'-hydroxyl groups in double-stranded DNA using NAD as a coenzyme and as the energy source for the reaction. The polypeptide is DNA ligase B (Shigella flexneri serotype 5b (strain 8401)).